Here is a 358-residue protein sequence, read N- to C-terminus: UDP-N-acetylglucosamine--N-acetylmuramyl-(pentapeptide) pyrophosphoryl-undecaprenol N-acetylglucosamine transferase (358 aa).

UDP-N-acetyl-alpha-D-glucosamine-binding positions include 11–13 (TGG), asparagine 120, arginine 161, serine 188, and glutamine 282.

The protein belongs to the glycosyltransferase 28 family. MurG subfamily.

It localises to the cell inner membrane. The enzyme catalyses di-trans,octa-cis-undecaprenyl diphospho-N-acetyl-alpha-D-muramoyl-L-alanyl-D-glutamyl-meso-2,6-diaminopimeloyl-D-alanyl-D-alanine + UDP-N-acetyl-alpha-D-glucosamine = di-trans,octa-cis-undecaprenyl diphospho-[N-acetyl-alpha-D-glucosaminyl-(1-&gt;4)]-N-acetyl-alpha-D-muramoyl-L-alanyl-D-glutamyl-meso-2,6-diaminopimeloyl-D-alanyl-D-alanine + UDP + H(+). The protein operates within cell wall biogenesis; peptidoglycan biosynthesis. Its function is as follows. Cell wall formation. Catalyzes the transfer of a GlcNAc subunit on undecaprenyl-pyrophosphoryl-MurNAc-pentapeptide (lipid intermediate I) to form undecaprenyl-pyrophosphoryl-MurNAc-(pentapeptide)GlcNAc (lipid intermediate II). The protein is UDP-N-acetylglucosamine--N-acetylmuramyl-(pentapeptide) pyrophosphoryl-undecaprenol N-acetylglucosamine transferase of Synechococcus sp. (strain CC9311).